Consider the following 1342-residue polypeptide: DNA-directed RNA polymerase subunit beta (1342 aa).

Belongs to the RNA polymerase beta chain family. The RNAP catalytic core consists of 2 alpha, 1 beta, 1 beta' and 1 omega subunit. When a sigma factor is associated with the core the holoenzyme is formed, which can initiate transcription.

The enzyme catalyses RNA(n) + a ribonucleoside 5'-triphosphate = RNA(n+1) + diphosphate. Functionally, DNA-dependent RNA polymerase catalyzes the transcription of DNA into RNA using the four ribonucleoside triphosphates as substrates. The polypeptide is DNA-directed RNA polymerase subunit beta (Salmonella typhi).